A 448-amino-acid polypeptide reads, in one-letter code: Probable glycine dehydrogenase (decarboxylating) subunit 1 (448 aa).

The protein belongs to the GcvP family. N-terminal subunit subfamily. As to quaternary structure, the glycine cleavage system is composed of four proteins: P, T, L and H. In this organism, the P 'protein' is a heterodimer of two subunits.

It catalyses the reaction N(6)-[(R)-lipoyl]-L-lysyl-[glycine-cleavage complex H protein] + glycine + H(+) = N(6)-[(R)-S(8)-aminomethyldihydrolipoyl]-L-lysyl-[glycine-cleavage complex H protein] + CO2. Functionally, the glycine cleavage system catalyzes the degradation of glycine. The P protein binds the alpha-amino group of glycine through its pyridoxal phosphate cofactor; CO(2) is released and the remaining methylamine moiety is then transferred to the lipoamide cofactor of the H protein. In Bacillus pumilus (strain SAFR-032), this protein is Probable glycine dehydrogenase (decarboxylating) subunit 1.